The primary structure comprises 208 residues: Octanoyltransferase (208 aa).

One can recognise a BPL/LPL catalytic domain in the interval 31–208 (GSEREMVWLL…LKKEFYKVFA (178 aa)). Residues 70–77 (RGGKYSYH), 142–144 (AFG), and 155–157 (GVA) each bind substrate. Catalysis depends on C173, which acts as the Acyl-thioester intermediate.

Belongs to the LipB family.

The protein resides in the cytoplasm. The catalysed reaction is octanoyl-[ACP] + L-lysyl-[protein] = N(6)-octanoyl-L-lysyl-[protein] + holo-[ACP] + H(+). The protein operates within protein modification; protein lipoylation via endogenous pathway; protein N(6)-(lipoyl)lysine from octanoyl-[acyl-carrier-protein]: step 1/2. Its function is as follows. Catalyzes the transfer of endogenously produced octanoic acid from octanoyl-acyl-carrier-protein onto the lipoyl domains of lipoate-dependent enzymes. Lipoyl-ACP can also act as a substrate although octanoyl-ACP is likely to be the physiological substrate. The polypeptide is Octanoyltransferase (Anaplasma phagocytophilum (strain HZ)).